The primary structure comprises 432 residues: Alpha-galactosidase (432 aa).

2–68 contributes to the NAD(+) binding site; that stretch reads KKITFIGAGS…PSVAINSYDD (67 aa). Asn148 serves as a coordination point for substrate. Cys169 provides a ligand contact to Mn(2+). Residue His170 is the Proton donor of the active site. Position 199 (His199) interacts with Mn(2+).

Belongs to the glycosyl hydrolase 4 family. Homodimer. Mn(2+) serves as cofactor. The cofactor is NAD(+).

The protein resides in the cytoplasm. It carries out the reaction Hydrolysis of terminal, non-reducing alpha-D-galactose residues in alpha-D-galactosides, including galactose oligosaccharides, galactomannans and galactolipids.. Catalyzes the hydrolysis of melibiose and alpha-galactosides of the raffinose family of oligosaccharides (RFOs) such as raffinose and stachyose. Cannot act on polymeric substrates such as locust bean gum. The polypeptide is Alpha-galactosidase (Bacillus subtilis (strain 168)).